Here is a 134-residue protein sequence, read N- to C-terminus: Profilin-4 (134 aa).

It belongs to the profilin family. In terms of assembly, occurs in many kinds of cells as a complex with monomeric actin in a 1:1 ratio. As to expression, specifically expressed in mature and germinating pollen grains, and growing pollen tubes (at protein level).

Its subcellular location is the cytoplasm. It localises to the cytoskeleton. Its function is as follows. Binds to actin monomers and regulates the organization of the actin cytoskeleton. At high concentrations, profilin prevents the polymerization of actin, whereas it enhances it at low concentrations. At low concentrations, associates with the poly-proline motif of formins to enhance actin filament elongation rate. Acts redundantly with PRF5 to regulate apical actin polymerization at the tip of pollen tube and control polarized pollen tube growth. Functions probably by favoring formin-mediated actin polymerization at pollen tube tips. This is Profilin-4 from Arabidopsis thaliana (Mouse-ear cress).